Reading from the N-terminus, the 107-residue chain is Nucleoid-associated protein R00231 (107 aa).

Belongs to the YbaB/EbfC family. In terms of assembly, homodimer.

It is found in the cytoplasm. It localises to the nucleoid. Functionally, binds to DNA and alters its conformation. May be involved in regulation of gene expression, nucleoid organization and DNA protection. The polypeptide is Nucleoid-associated protein R00231 (Rhizobium meliloti (strain 1021) (Ensifer meliloti)).